Reading from the N-terminus, the 860-residue chain is Leucine--tRNA ligase (860 aa).

The 'HIGH' region signature appears at 42-52 (PYPSGRLHMGH). Positions 619–623 (KMSKS) match the 'KMSKS' region motif. Lys-622 provides a ligand contact to ATP.

Belongs to the class-I aminoacyl-tRNA synthetase family.

The protein resides in the cytoplasm. The catalysed reaction is tRNA(Leu) + L-leucine + ATP = L-leucyl-tRNA(Leu) + AMP + diphosphate. The chain is Leucine--tRNA ligase from Escherichia coli O157:H7.